Consider the following 430-residue polypeptide: Protein POLLENLESS 3-LIKE 2 (430 aa).

Residues 1-21 (MMRDVFRPTKSAPCSPAKPLG) form a disordered region. TPR repeat units follow at residues 40 to 73 (DSPY…GDRV), 74 to 107 (DSAL…CSDQ), 110 to 143 (ESLD…IQKG), 170 to 203 (TRLL…APDN), 205 to 236 (KMCN…VVDG), and 238 to 257 (RGVD…LNDL). Positions 81–107 (AIVMKQQNRAEEAIEAIKSLRVRCSDQ) form a coiled coil. Residues 346-376 (KLKRTRSSSQGMGMLSGIGGDHEGETNTSTR) are disordered.

Belongs to the MS5 protein family.

It localises to the nucleus. Functionally, probably involved in the regulation of cell division. The sequence is that of Protein POLLENLESS 3-LIKE 2 from Arabidopsis thaliana (Mouse-ear cress).